The primary structure comprises 659 residues: DNA ligase (659 aa).

NAD(+)-binding positions include 32–36 (DAEYD), 81–82 (SL), and glutamate 110. The active-site N6-AMP-lysine intermediate is lysine 112. Arginine 133, glutamate 168, lysine 284, and lysine 308 together coordinate NAD(+). Residues cysteine 402, cysteine 405, cysteine 420, and cysteine 425 each contribute to the Zn(2+) site. One can recognise a BRCT domain in the interval 582 to 659 (AKPQIFAGKS…SEEEFAELLP (78 aa)).

The protein belongs to the NAD-dependent DNA ligase family. LigA subfamily. The cofactor is Mg(2+). Mn(2+) is required as a cofactor.

The enzyme catalyses NAD(+) + (deoxyribonucleotide)n-3'-hydroxyl + 5'-phospho-(deoxyribonucleotide)m = (deoxyribonucleotide)n+m + AMP + beta-nicotinamide D-nucleotide.. In terms of biological role, DNA ligase that catalyzes the formation of phosphodiester linkages between 5'-phosphoryl and 3'-hydroxyl groups in double-stranded DNA using NAD as a coenzyme and as the energy source for the reaction. It is essential for DNA replication and repair of damaged DNA. In Desulfitobacterium hafniense (strain DSM 10664 / DCB-2), this protein is DNA ligase.